A 456-amino-acid polypeptide reads, in one-letter code: tRNA(Ile)-lysidine synthase (456 aa).

27 to 32 (SGGVDS) is a binding site for ATP.

It belongs to the tRNA(Ile)-lysidine synthase family.

Its subcellular location is the cytoplasm. The enzyme catalyses cytidine(34) in tRNA(Ile2) + L-lysine + ATP = lysidine(34) in tRNA(Ile2) + AMP + diphosphate + H(+). Ligates lysine onto the cytidine present at position 34 of the AUA codon-specific tRNA(Ile) that contains the anticodon CAU, in an ATP-dependent manner. Cytidine is converted to lysidine, thus changing the amino acid specificity of the tRNA from methionine to isoleucine. This Vibrio atlanticus (strain LGP32) (Vibrio splendidus (strain Mel32)) protein is tRNA(Ile)-lysidine synthase.